The sequence spans 1065 residues: Putative guanine nucleotide-exchange factor SED4 (1065 aa).

The Cytoplasmic portion of the chain corresponds to Met-1–Lys-346. Residue Ser-65 is modified to Phosphoserine. WD repeat units follow at residues Phe-259–Leu-298 and Val-302–Leu-341. A helical; Signal-anchor for type II membrane protein transmembrane segment spans residues Phe-347 to Tyr-365. Topologically, residues Lys-366–Leu-1065 are lumenal. N-linked (GlcNAc...) asparagine glycosylation is present at Asn-388. Disordered regions lie at residues Thr-458–Phe-477, Val-482–Ile-520, and Gln-551–Asp-625. The segment covering Ser-465 to Ser-476 has biased composition (low complexity). Polar residues predominate over residues Val-482 to Ile-495. Residues Ser-568–Thr-621 show a composition bias toward low complexity. N-linked (GlcNAc...) asparagine glycosylation occurs at Asn-620. 4 tandem repeats follow at residues Ile-824–Leu-833, Ala-834–Leu-843, Ala-844–Leu-853, and Ala-854–Phe-863. The interval Ile-824 to Phe-863 is 4 X 10 AA tandem repeats. The N-linked (GlcNAc...) asparagine glycan is linked to Asn-1039. The Prevents secretion from ER motif lies at His-1062 to Leu-1065.

The protein belongs to the WD repeat SEC12 family.

It localises to the endoplasmic reticulum membrane. Its subcellular location is the golgi apparatus membrane. Its function is as follows. Putative guanine nucleotide-exchange factor (GEF) involved in the formation or budding of transport vesicles from the ER. Positive regulator of SAR1 probably through inhibition of the GTPase activation by SEC23. In Saccharomyces cerevisiae (strain ATCC 204508 / S288c) (Baker's yeast), this protein is Putative guanine nucleotide-exchange factor SED4 (SED4).